The primary structure comprises 597 residues: MTTNLKQKLKTAPKKPGCYLWKDSNGKVLYVGKASNIFNRVHQYFQKNNPYKTQLLSSQISDVDFFILKDENDALNLEAKLINQYQPRFNLVLKQNNGYLYFYITKAKKPTLELARKYQIKTTKCFGPFASSKFKLREIHDLLLKLFPLRKCAPHQKNHPCFYFQMGLCMGQCMQTDTKEKYQQVISNIEQFFNDPSVVINYLKAAEKKASDNQEFEKAQQFLTLQKAVLELTKTHHTTIIKQKSSHDFIGYVFQNNVLAITIFCYEKGELTDKEQAVFTLEQTDIVEVESAIITFIYHHYKTTPLPSKITVSLDETNLKLISDSLKIGVFKPKNGNEKLILQTVIDNAKHALATKWLKFTSNYDKTQLHKDLAQLLNTDYIHSLEIIDVSFYDQNHVVGCMLRFEDGKKIKHLSRRYNINSLKKGDTNHIALLVYRRILSAMQTKANLPFSDLLIIDGGKAQIKSVKQVFSLFSNVKPPIIIGLVKNKNHQTDHIMLSDFQVKKIAINSPLFHYLATIQTEVDGFAKRSAFNKLSNHQLQNPLLQIPGVGKITAQILFDNFQTLNNIKLASVNELSQFIKKPLAQKIKTYFAKQTD.

Residues 14–91 enclose the GIY-YIG domain; sequence KKPGCYLWKD…INQYQPRFNL (78 aa).

The protein belongs to the UvrC family. In terms of assembly, interacts with UvrB in an incision complex.

Its subcellular location is the cytoplasm. In terms of biological role, the UvrABC repair system catalyzes the recognition and processing of DNA lesions. UvrC both incises the 5' and 3' sides of the lesion. The N-terminal half is responsible for the 3' incision and the C-terminal half is responsible for the 5' incision. This Mycoplasma genitalium (strain ATCC 33530 / DSM 19775 / NCTC 10195 / G37) (Mycoplasmoides genitalium) protein is UvrABC system protein C.